The sequence spans 948 residues: ELKS/Rab6-interacting/CAST family member 1 (948 aa).

Residues 1 to 54 (MYGSARSVGKVEPSSQSPGRSPRLPRSPRLGHRRTNSTGGSSGNSVGGGSGKTL) form a disordered region. Residue lysine 10 is modified to N6-acetyllysine. Residues 13–28 (PSSQSPGRSPRLPRSP) are compositionally biased toward low complexity. 3 positions are modified to phosphoserine: serine 17, serine 21, and serine 37. Threonine 38 bears the Phosphothreonine mark. Over residues 40–51 (GSSGNSVGGGSG) the composition is skewed to gly residues. Phosphoserine is present on residues serine 55, serine 75, serine 94, serine 796, and serine 937. Positions 144–920 (RQARDNTIMD…RMKLMADNYE (777 aa)) form a coiled coil. The segment covering 773 to 796 (KHKEQVEKKKSAQMLEEARRREDS) has biased composition (basic and acidic residues). Disordered regions lie at residues 773 to 801 (KHKE…SDSS) and 903 to 948 (QLKQ…GIWA). Positions 939–948 (DQDEEEGIWA) are enriched in acidic residues.

Interacts with the GTB-bound forms of RAB6A isoform 1 and isoform 2 and with RAB6B. The interaction was strongest with RAB6B, followed by RAB6A isoform 2 and weakest with RAB6A isoform 1. Part of a complex with CHUK, IKBKB and IKBKG. Interacts with CHUK, IKBKB and IKBKG. The interaction with IKBKG is independent of CHUK and IKBKB. Interacts with NFKBIA. Isoform 1 interacts through its C-terminus with the PDZ domains of RIMS1 and RIMS2. Interacts with ERC2/CAST1. Interacts with SDCCAG8. Part of a cortical microtubule stabilization complex (CMSC) composed of KANK1, PPFIA1, PPFIBP1, ERC1/ELKS, PHLDB2/LL5beta, CLASPs, KIF21A and possibly additional interactors; within CMSCs KANK1 and PHLDB2/LL5beta appear to be the core components for targeting of microtubule-binding proteins KIF21A and CLASPs, whereas PPFIA1, PPFIBP1 and ERC1/ELKS serve as scaffolds for protein clustering. In terms of tissue distribution, isoform 1 is specifically expressed in brain. A further probable isoform is widely expressed outside of brain It is referred to as ERC1a by PubMed:12391317 and characterized by a C-terminus identical to that of isoforms 1 in human and mouse.

It is found in the cytoplasm. The protein resides in the cytoskeleton. It localises to the microtubule organizing center. The protein localises to the centrosome. Its subcellular location is the membrane. It is found in the golgi apparatus membrane. The protein resides in the presynaptic active zone. It localises to the cell projection. The protein localises to the podosome. Functionally, regulatory subunit of the IKK complex. Probably recruits IkappaBalpha/NFKBIA to the complex. May be involved in the organization of the cytomatrix at the nerve terminals active zone (CAZ) which regulates neurotransmitter release. May be involved in vesicle trafficking at the CAZ. May be involved in Rab-6 regulated endosomes to Golgi transport. This is ELKS/Rab6-interacting/CAST family member 1 (Erc1) from Rattus norvegicus (Rat).